A 67-amino-acid chain; its full sequence is DNA-directed RNA polymerase subunit omega (67 aa).

It belongs to the RNA polymerase subunit omega family. The RNAP catalytic core consists of 2 alpha, 1 beta, 1 beta' and 1 omega subunit. When a sigma factor is associated with the core the holoenzyme is formed, which can initiate transcription.

It catalyses the reaction RNA(n) + a ribonucleoside 5'-triphosphate = RNA(n+1) + diphosphate. In terms of biological role, promotes RNA polymerase assembly. Latches the N- and C-terminal regions of the beta' subunit thereby facilitating its interaction with the beta and alpha subunits. The protein is DNA-directed RNA polymerase subunit omega of Listeria welshimeri serovar 6b (strain ATCC 35897 / DSM 20650 / CCUG 15529 / CIP 8149 / NCTC 11857 / SLCC 5334 / V8).